The primary structure comprises 446 residues: Phosphoglucosamine mutase (446 aa).

Serine 100 functions as the Phosphoserine intermediate in the catalytic mechanism. Mg(2+)-binding residues include serine 100, aspartate 239, aspartate 241, and aspartate 243. At serine 100 the chain carries Phosphoserine.

The protein belongs to the phosphohexose mutase family. Requires Mg(2+) as cofactor. Activated by phosphorylation.

The enzyme catalyses alpha-D-glucosamine 1-phosphate = D-glucosamine 6-phosphate. Its function is as follows. Catalyzes the conversion of glucosamine-6-phosphate to glucosamine-1-phosphate. This Oceanobacillus iheyensis (strain DSM 14371 / CIP 107618 / JCM 11309 / KCTC 3954 / HTE831) protein is Phosphoglucosamine mutase.